Here is a 154-residue protein sequence, read N- to C-terminus: Ribosome maturation factor RimP (154 aa).

The protein belongs to the RimP family.

The protein localises to the cytoplasm. Required for maturation of 30S ribosomal subunits. The chain is Ribosome maturation factor RimP from Desulforudis audaxviator (strain MP104C).